Reading from the N-terminus, the 207-residue chain is Outer-membrane lipoprotein carrier protein (207 aa).

A signal peptide spans 1–21 (MRAIRMLLVSALAMGAVSAHA).

It belongs to the LolA family. As to quaternary structure, monomer.

The protein resides in the periplasm. Participates in the translocation of lipoproteins from the inner membrane to the outer membrane. Only forms a complex with a lipoprotein if the residue after the N-terminal Cys is not an aspartate (The Asp acts as a targeting signal to indicate that the lipoprotein should stay in the inner membrane). The protein is Outer-membrane lipoprotein carrier protein of Pseudomonas entomophila (strain L48).